Reading from the N-terminus, the 515-residue chain is Cytidine and dCMP deaminase domain-containing protein 1 (515 aa).

Polar residues-rich tracts occupy residues 1–11 (MKEAGQMQNLE) and 18–27 (SVSTQTGSMT). Disordered stretches follow at residues 1–27 (MKEAGQMQNLESARAGRSVSTQTGSMT) and 56–83 (RQKSQKNEEGKHGPLGDNEEMTRVSTDK). Residues 60–83 (QKNEEGKHGPLGDNEEMTRVSTDK) show a composition bias toward basic and acidic residues. The CMP/dCMP-type deaminase 1 domain occupies 71–169 (GDNEEMTRVS…SLLTEASSSE (99 aa)). 3 residues coordinate Zn(2+): His110, Cys135, and Cys138. Residues 272 to 284 (NLRQNMKDLILLL) carry the Nuclear export signal motif. Residues 318-483 (EIARHCMVQA…LNPSEAYGLE (166 aa)) form the CMP/dCMP-type deaminase 2 domain. His399 contributes to the Zn(2+) binding site. Catalysis depends on Glu401, which acts as the Proton donor. Cys427 and Cys430 together coordinate Zn(2+). The tract at residues 481-515 (GLEQNEPERRENGVLRPVPQKEEQHQDKKLRLGIH) is disordered. A compositionally biased stretch (basic and acidic residues) spans 486 to 515 (EPERRENGVLRPVPQKEEQHQDKKLRLGIH). The Bipartite nuclear localization signal signature appears at 489 to 511 (RRENGVLRPVPQKEEQHQDKKLR).

The protein belongs to the cytidine and deoxycytidylate deaminase family. The cofactor is Zn(2+).

Its subcellular location is the cytoplasm. The protein resides in the nucleus. It carries out the reaction 2'-deoxycytidine + H2O + H(+) = 2'-deoxyuridine + NH4(+). It catalyses the reaction cytidine + H2O + H(+) = uridine + NH4(+). In terms of biological role, catalyzes the deamination of cytidine and deoxycytidine into uridine and deoxyuridine, respectively. May play an important role in testicular development and spermatogenesis. This is Cytidine and dCMP deaminase domain-containing protein 1 (CDADC1) from Macaca fascicularis (Crab-eating macaque).